The sequence spans 202 residues: Cilia- and flagella-associated protein 418 (202 aa).

Residues Asp-71 to Ala-90 are disordered. Polar residues predominate over residues Thr-74–Ala-90.

Ubiquitously expressed during early development and in adult tissues including the eye, brain, heart and kidney.

The protein resides in the cytoplasm. Its subcellular location is the photoreceptor inner segment. Functionally, may be involved in photoreceptor outer segment disk morphogenesis. In Danio rerio (Zebrafish), this protein is Cilia- and flagella-associated protein 418 (cfap418).